Consider the following 363-residue polypeptide: Molybdenum import ATP-binding protein ModC (363 aa).

The ABC transporter domain maps to 1–232 (MLDLDLRRRQ…PGLRPLTGRY (232 aa)). Residue 30-37 (GRSGSGKT) participates in ATP binding. In terms of domain architecture, Mop spans 292 to 358 (RVSIRNVLPA…IKALTIARGD (67 aa)).

The protein belongs to the ABC transporter superfamily. Molybdate importer (TC 3.A.1.8) family. In terms of assembly, the complex is composed of two ATP-binding proteins (ModC), two transmembrane proteins (ModB) and a solute-binding protein (ModA).

It localises to the cell inner membrane. It carries out the reaction molybdate(out) + ATP + H2O = molybdate(in) + ADP + phosphate + H(+). Part of the ABC transporter complex ModABC involved in molybdenum import. Responsible for energy coupling to the transport system. This Paramagnetospirillum magneticum (strain ATCC 700264 / AMB-1) (Magnetospirillum magneticum) protein is Molybdenum import ATP-binding protein ModC.